A 126-amino-acid chain; its full sequence is UPF0538 protein C2orf76 homolog (126 aa).

The protein belongs to the UPF0538 family.

The chain is UPF0538 protein C2orf76 homolog from Mus musculus (Mouse).